The chain runs to 320 residues: tRNA U34 carboxymethyltransferase (320 aa).

Carboxy-S-adenosyl-L-methionine-binding positions include Lys89, Trp103, Lys108, Gly128, 150–152 (DPT), 179–180 (IE), Met194, Tyr198, and Arg313.

Belongs to the class I-like SAM-binding methyltransferase superfamily. CmoB family. In terms of assembly, homotetramer.

It catalyses the reaction carboxy-S-adenosyl-L-methionine + 5-hydroxyuridine(34) in tRNA = 5-carboxymethoxyuridine(34) in tRNA + S-adenosyl-L-homocysteine + H(+). Functionally, catalyzes carboxymethyl transfer from carboxy-S-adenosyl-L-methionine (Cx-SAM) to 5-hydroxyuridine (ho5U) to form 5-carboxymethoxyuridine (cmo5U) at position 34 in tRNAs. The sequence is that of tRNA U34 carboxymethyltransferase from Actinobacillus pleuropneumoniae serotype 7 (strain AP76).